A 119-amino-acid polypeptide reads, in one-letter code: Large ribosomal subunit protein bL20 (119 aa).

This sequence belongs to the bacterial ribosomal protein bL20 family.

Binds directly to 23S ribosomal RNA and is necessary for the in vitro assembly process of the 50S ribosomal subunit. It is not involved in the protein synthesizing functions of that subunit. This chain is Large ribosomal subunit protein bL20, found in Mycoplasma capricolum subsp. capricolum (strain California kid / ATCC 27343 / NCTC 10154).